We begin with the raw amino-acid sequence, 256 residues long: Gluconate 5-dehydrogenase (256 aa).

Position 15–39 (15–39) interacts with NADP(+); it reads LVTGASRGIGLTLAKGLARYGAEVV. Ser-147 serves as a coordination point for substrate. The active-site Proton acceptor is the Tyr-160.

The protein belongs to the short-chain dehydrogenases/reductases (SDR) family. Homodimer.

The protein resides in the cytoplasm. It carries out the reaction D-gluconate + NADP(+) = 5-dehydro-D-gluconate + NADPH + H(+). Functionally, catalyzes the reversible NADP-dependent oxidation of gluconate to 5-ketogluconate. Is involved in the non-phosphorylative, ketogenic oxidation of glucose. Is almost inactive with NAD as cosubstrate. Displays high substrate specificity since D-Glucose, D-sorbitol, and D-mannitol are not oxidized by the enzyme, and 2-ketogluconate and L-sorbose are not reduced. Can accept D-fructose as a substrate, with a rate that is only 10% of the rate of 5-ketogluconate reduction. The protein is Gluconate 5-dehydrogenase of Gluconobacter oxydans (strain 621H) (Gluconobacter suboxydans).